A 75-amino-acid polypeptide reads, in one-letter code: Large ribosomal subunit protein eL14 (75 aa).

The protein belongs to the eukaryotic ribosomal protein eL14 family.

The protein is Large ribosomal subunit protein eL14 of Methanothermobacter thermautotrophicus (strain ATCC 29096 / DSM 1053 / JCM 10044 / NBRC 100330 / Delta H) (Methanobacterium thermoautotrophicum).